The primary structure comprises 289 residues: Probable endonuclease 4 (289 aa).

9 residues coordinate Zn(2+): histidine 74, histidine 115, glutamate 150, aspartate 184, histidine 187, histidine 218, aspartate 231, histidine 233, and glutamate 263.

It belongs to the AP endonuclease 2 family. Requires Zn(2+) as cofactor.

The enzyme catalyses Endonucleolytic cleavage to 5'-phosphooligonucleotide end-products.. Functionally, endonuclease IV plays a role in DNA repair. It cleaves phosphodiester bonds at apurinic or apyrimidinic (AP) sites, generating a 3'-hydroxyl group and a 5'-terminal sugar phosphate. This Mycoplasma capricolum subsp. capricolum (strain California kid / ATCC 27343 / NCTC 10154) protein is Probable endonuclease 4.